The following is a 1136-amino-acid chain: Rho GTPase-activating protein 45 (1136 aa).

Disordered regions lie at residues 1 to 73 (MFSR…RHAS) and 91 to 110 (HRSPLTAASPGELPTEGAGP). Serine 23, serine 25, serine 73, serine 93, and serine 99 each carry phosphoserine. Residues 269–539 (EEVDVLLQRC…SSKLYDPGQQ (271 aa)) enclose the F-BAR domain. Coiled coils occupy residues 376 to 412 (EHEKRRKEIKEAWHRAQRKLQEAESNLRKAKQGYVQR) and 440 to 499 (TATK…RQSD). Phosphoserine is present on residues serine 569, serine 578, serine 592, and serine 619. The interval 583–662 (DVARPEAAGS…SSTEELVDPD (80 aa)) is disordered. Positions 646-655 (TSSSGTMSST) are enriched in low complexity. The segment at 702 to 747 (THRLRKLRTPAKCRECNSYVYFQGAECEECCLACHKKCLETLAIQC) adopts a Phorbol-ester/DAG-type zinc-finger fold. The Rho-GAP domain maps to 761–974 (QDFSHAARSA…TLIVHYGLVF (214 aa)). Residues serine 949, serine 1027, serine 1030, and serine 1032 each carry the phosphoserine modification. The disordered stretch occupies residues 1061–1136 (EASLEVASGS…SCRERQPEFV (76 aa)). Over residues 1095–1109 (QQLSGFNTNQSNNVL) the composition is skewed to polar residues.

As to quaternary structure, HA-1 forms a complex with MHC class I HLA-A*0201. Expressed on cells of the hematopoietic lineage. Detected in dendritic cells and epidermal Langerhans cells. Expressed in peripheral blood mononuclear cells, in all leukemia/lymphoma cell lines. Detected also in some solid tumors and tissues such as cancerous and non-cancerous tissue.

Its subcellular location is the cytoplasm. The protein resides in the cell projection. It localises to the ruffle membrane. Contains a GTPase activator for the Rho-type GTPases (RhoGAP) domain that would be able to negatively regulate the actin cytoskeleton as well as cell spreading. However, also contains N-terminally a BAR-domin which is able to play an autoinhibitory effect on this RhoGAP activity. Its function is as follows. Precursor of the histocompatibility antigen HA-1. More generally, minor histocompatibility antigens (mHags) refer to immunogenic peptide which, when complexed with MHC, can generate an immune response after recognition by specific T-cells. The peptides are derived from polymorphic intracellular proteins, which are cleaved by normal pathways of antigen processing. The binding of these peptides to MHC class I or class II molecules and its expression on the cell surface can stimulate T-cell responses and thereby trigger graft rejection or graft-versus-host disease (GVHD) after hematopoietic stem cell transplantation from HLA-identical sibling donor. GVHD is a frequent complication after bone marrow transplantation (BMT), due to mismatch of minor histocompatibility antigen in HLA-matched sibling marrow transplants. Specifically, mismatching for mHag HA-1 which is recognized as immunodominant, is shown to be associated with the development of severe GVHD after HLA-identical BMT. HA-1 is presented to the cell surface by MHC class I HLA-A*0201, but also by other HLA-A alleles. This complex specifically elicits donor-cytotoxic T-lymphocyte (CTL) reactivity against hematologic malignancies after treatment by HLA-identical allogenic BMT. It induces cell recognition and lysis by CTL. This chain is Rho GTPase-activating protein 45, found in Homo sapiens (Human).